The sequence spans 418 residues: Tryptophan synthase beta chain (418 aa).

Polar residues predominate over residues 1-18; that stretch reads MTSTLPKASQPDPSSLQP. The interval 1–28 is disordered; it reads MTSTLPKASQPDPSSLQPSARPGAHGRF. Position 111 is an N6-(pyridoxal phosphate)lysine (Lys111).

The protein belongs to the TrpB family. Tetramer of two alpha and two beta chains. Pyridoxal 5'-phosphate is required as a cofactor.

It carries out the reaction (1S,2R)-1-C-(indol-3-yl)glycerol 3-phosphate + L-serine = D-glyceraldehyde 3-phosphate + L-tryptophan + H2O. It functions in the pathway amino-acid biosynthesis; L-tryptophan biosynthesis; L-tryptophan from chorismate: step 5/5. Its function is as follows. The beta subunit is responsible for the synthesis of L-tryptophan from indole and L-serine. This is Tryptophan synthase beta chain from Synechococcus sp. (strain CC9902).